The sequence spans 85 residues: Insect toxin 2-53 (85 aa).

An N-terminal signal peptide occupies residues M1–A21. The LCN-type CS-alpha/beta domain maps to D22–G82. 4 disulfides stabilise this stretch: C31–C81, C35–C56, C42–C63, and C46–C65. G82 carries the glycine amide modification.

This sequence belongs to the long (4 C-C) scorpion toxin superfamily. Sodium channel inhibitor family. Beta subfamily. As to expression, expressed by the venom gland.

It localises to the secreted. Its function is as follows. Depressant insect toxins cause a transient contraction paralysis followed by a slow flaccid paralysis. They bind voltage-independently to sodium channels (Nav) and block action potentials, primarily by depolarizing the axonal membrane and suppressing the sodium current. This chain is Insect toxin 2-53, found in Leiurus hebraeus (Hebrew deathstalker scorpion).